We begin with the raw amino-acid sequence, 309 residues long: Homoserine O-succinyltransferase (309 aa).

Cys-142 acts as the Acyl-thioester intermediate in catalysis. Positions 163 and 192 each coordinate substrate. The Proton acceptor role is filled by His-235. Glu-237 is a catalytic residue. Substrate is bound at residue Arg-249.

Belongs to the MetA family. In terms of assembly, homodimer.

It is found in the cytoplasm. The catalysed reaction is L-homoserine + succinyl-CoA = O-succinyl-L-homoserine + CoA. It participates in amino-acid biosynthesis; L-methionine biosynthesis via de novo pathway; O-succinyl-L-homoserine from L-homoserine: step 1/1. Transfers a succinyl group from succinyl-CoA to L-homoserine, forming succinyl-L-homoserine. The sequence is that of Homoserine O-succinyltransferase from Escherichia coli O157:H7.